We begin with the raw amino-acid sequence, 150 residues long: Ribonuclease pancreatic delta-type (150 aa).

A signal peptide spans 1-25 (MGLEKSFILFSLLVLVLGWVQPSLG). Position 35 (Arg35) interacts with substrate. His37 acts as the Proton acceptor in catalysis. Cystine bridges form between Cys51/Cys110, Cys65/Cys121, Cys83/Cys136, and Cys90/Cys98. Substrate-binding positions include 66–70 (KPVNT) and Lys91. His145 (proton donor) is an active-site residue.

It belongs to the pancreatic ribonuclease family. As to quaternary structure, monomer.

The protein localises to the secreted. It carries out the reaction an [RNA] containing cytidine + H2O = an [RNA]-3'-cytidine-3'-phosphate + a 5'-hydroxy-ribonucleotide-3'-[RNA].. The catalysed reaction is an [RNA] containing uridine + H2O = an [RNA]-3'-uridine-3'-phosphate + a 5'-hydroxy-ribonucleotide-3'-[RNA].. Functionally, endonuclease that catalyzes the cleavage of RNA on the 3' side of pyrimidine nucleotides. Acts on single-stranded and double-stranded RNA. This Rattus tiomanicus (Malayan field rat) protein is Ribonuclease pancreatic delta-type.